The following is a 769-amino-acid chain: Gephyrin (769 aa).

Residues Q14–E153 are MPT Mo-transferase. The tract at residues L140–H349 is interaction with GABARAP. 2 disordered regions span residues D181 to S232 and T260 to V299. Residues P187–T199 are compositionally biased toward pro residues. S188 and S194 each carry phosphoserine. T198 is subject to Phosphothreonine. S200 carries the phosphoserine modification. C212 carries the S-palmitoyl cysteine lipid modification. Residues A261–T286 are compositionally biased toward polar residues. S262 is subject to Phosphoserine. Residues T265 and T266 each carry the phosphothreonine modification. Residues S268 and S270 each carry the phosphoserine modification. Residue C284 is the site of S-palmitoyl cysteine attachment. Residues S327 to L769 form an MPT adenylyltransferase region. S338 is modified (phosphoserine).

In the N-terminal section; belongs to the MoaB/Mog family. The protein in the C-terminal section; belongs to the MoeA family. As to quaternary structure, homotrimer, homodimer and homooligomer. Interacts with SRGAP2 (via SH3 domain). Interacts with GLRB. Interacts with GABARAP. Interacts with GABRA3. GABRA3 and GLRB occupy overlapping binding sites. Interacts with ARHGAP32; IQSEC3, INSYN1 and INSYN2A. Mg(2+) is required as a cofactor. In terms of processing, palmitoylated. Palmitoylation is stimulated by GABA type A receptors activity. Palmitoylation by ZDHHC12 regulates clustering at synapses.

It is found in the postsynaptic cell membrane. The protein resides in the cell membrane. Its subcellular location is the cytoplasm. The protein localises to the cytosol. It localises to the cytoskeleton. It is found in the cell projection. The protein resides in the dendrite. Its subcellular location is the postsynaptic density. It catalyses the reaction molybdopterin + ATP + H(+) = adenylyl-molybdopterin + diphosphate. It carries out the reaction adenylyl-molybdopterin + molybdate = Mo-molybdopterin + AMP + H(+). It participates in cofactor biosynthesis; molybdopterin biosynthesis. With respect to regulation, inhibited by copper and tungsten. Functionally, microtubule-associated protein involved in membrane protein-cytoskeleton interactions. It is thought to anchor the inhibitory glycine receptor (GLYR) to subsynaptic microtubules. Acts as a major instructive molecule at inhibitory synapses, where it also clusters GABA type A receptors. Also has a catalytic activity and catalyzes two steps in the biosynthesis of the molybdenum cofactor. In the first step, molybdopterin is adenylated. Subsequently, molybdate is inserted into adenylated molybdopterin and AMP is released. In Mus musculus (Mouse), this protein is Gephyrin (Gphn).